The following is a 299-amino-acid chain: Oxygen-dependent coproporphyrinogen-III oxidase (299 aa).

S92 is a substrate binding site. Positions 96 and 106 each coordinate Mn(2+). Residue H106 is the Proton donor of the active site. A substrate-binding site is contributed by 108 to 110; that stretch reads NVR. H145 and H175 together coordinate Mn(2+). The interval 240–275 is important for dimerization; sequence YVEFNLVWDRGTLFGLQTGGRTESILMSMPPLVRWE. Residue 258–260 participates in substrate binding; that stretch reads GGR.

Belongs to the aerobic coproporphyrinogen-III oxidase family. Homodimer. Mn(2+) is required as a cofactor.

It is found in the cytoplasm. The enzyme catalyses coproporphyrinogen III + O2 + 2 H(+) = protoporphyrinogen IX + 2 CO2 + 2 H2O. It functions in the pathway porphyrin-containing compound metabolism; protoporphyrin-IX biosynthesis; protoporphyrinogen-IX from coproporphyrinogen-III (O2 route): step 1/1. In terms of biological role, involved in the heme biosynthesis. Catalyzes the aerobic oxidative decarboxylation of propionate groups of rings A and B of coproporphyrinogen-III to yield the vinyl groups in protoporphyrinogen-IX. The chain is Oxygen-dependent coproporphyrinogen-III oxidase from Escherichia coli (strain SE11).